The chain runs to 645 residues: Threonine--tRNA ligase (645 aa).

The 63-residue stretch at 1–63 (MNQINIQFPD…EQDGAIEIIT (63 aa)) folds into the TGS domain. Residues 242 to 540 (DHRKIGKDLE…LTEETKGAFP (299 aa)) are catalytic. Zn(2+) is bound by residues C336, H387, and H517.

It belongs to the class-II aminoacyl-tRNA synthetase family. Homodimer. Zn(2+) is required as a cofactor.

The protein localises to the cytoplasm. It catalyses the reaction tRNA(Thr) + L-threonine + ATP = L-threonyl-tRNA(Thr) + AMP + diphosphate + H(+). In terms of biological role, catalyzes the attachment of threonine to tRNA(Thr) in a two-step reaction: L-threonine is first activated by ATP to form Thr-AMP and then transferred to the acceptor end of tRNA(Thr). Also edits incorrectly charged L-seryl-tRNA(Thr). The protein is Threonine--tRNA ligase of Staphylococcus epidermidis (strain ATCC 35984 / DSM 28319 / BCRC 17069 / CCUG 31568 / BM 3577 / RP62A).